Consider the following 432-residue polypeptide: Monoacylglycerol lipase ABHD2 (432 aa).

At 1-14 (MNTHESEVYTVAPE) the chain is on the cytoplasmic side. Residues 15–35 (MPAMFDGMKLAAVATVLYVIV) traverse the membrane as a helical; Signal-anchor for type II membrane protein segment. Over 36–432 (RCLNLKSPTA…NQTTCQENTS (397 aa)) the chain is Extracellular. The 252-residue stretch at 132–383 (TMVICPGIGN…HGGHLGFFEG (252 aa)) folds into the AB hydrolase-1 domain. The N-linked (GlcNAc...) asparagine glycan is linked to N141. The Nucleophile role is filled by S212. N225 is a glycosylation site (N-linked (GlcNAc...) asparagine). Residues D346 and H377 each act as charge relay system in the active site. The disordered stretch occupies residues 413-432 (PPCQSKDAQSNQTTCQENTS). Polar residues predominate over residues 418 to 432 (KDAQSNQTTCQENTS). The N-linked (GlcNAc...) asparagine glycan is linked to N423.

It belongs to the AB hydrolase superfamily. AB hydrolase 4 family.

It is found in the cell membrane. It carries out the reaction Hydrolyzes glycerol monoesters of long-chain fatty acids.. The catalysed reaction is an acetyl ester + H2O = an aliphatic alcohol + acetate + H(+). The enzyme catalyses a triacylglycerol + H2O = a diacylglycerol + a fatty acid + H(+). It catalyses the reaction 2-(5Z,8Z,11Z,14Z-eicosatetraenoyl)-glycerol + H2O = glycerol + (5Z,8Z,11Z,14Z)-eicosatetraenoate + H(+). It carries out the reaction a butanoate ester + H2O = an aliphatic alcohol + butanoate + H(+). The catalysed reaction is hexadecanoate ester + H2O = an aliphatic alcohol + hexadecanoate + H(+). With respect to regulation, acylglycerol lipase activity is activated upon binding to progesterone. Its function is as follows. Progesterone-dependent acylglycerol lipase that catalyzes hydrolysis of endocannabinoid arachidonoylglycerol (AG) from cell membrane. Acts as a progesterone receptor: progesterone-binding activates the acylglycerol lipase activity, mediating degradation of 1-arachidonoylglycerol (1AG) and 2-arachidonoylglycerol (2AG) to glycerol and arachidonic acid (AA). Also displays an ester hydrolase activity against acetyl ester, butanoate ester and hexadecanoate ester. Plays a key role in sperm capacitation in response to progesterone by mediating degradation of 2AG, an inhibitor of the sperm calcium channel CatSper, leading to calcium influx via CatSper and sperm activation. May also play a role in smooth muscle cells migration. This is Monoacylglycerol lipase ABHD2 (abhd2a) from Danio rerio (Zebrafish).